We begin with the raw amino-acid sequence, 553 residues long: Protein spartin (553 aa).

In terms of domain architecture, MIT spans 15 to 96 (IRTAYKAAMT…ETELRYRLKV (82 aa)). Positions 105-130 (DDSAVEATEESRAEMDTKRPPLLAEN) are disordered. Over residues 113–123 (EESRAEMDTKR) the composition is skewed to basic and acidic residues. One can recognise a Senescence domain in the interval 325 to 509 (IVSAADFIAS…SQNVNYITPK (185 aa)).

As to quaternary structure, interacts with Eps-15 (via C-terminal region); the interaction is required for spartin localization to the NMJ presynaptic membrane. As to expression, expressed in larval brain, ventral nerve cord and neuropil (at protein level).

It is found in the presynaptic cell membrane. It localises to the early endosome. The protein resides in the lipid droplet. In terms of biological role, during postembryonic development, functions with endocytic adapter Eps-15 in neurons to restrain synaptic growth, by inhibiting BMP signaling, and to control synaptic endocytosis. Required presynaptically for neuromuscular junction (NMJ) neurotransmission. Inhibits neuronal BMP signaling by promoting endocytic internalization and subsequent endosomal trafficking of the BMP receptor wit. In this way, regulates the Fmr1 translational regulator controlling Futsch expression to modulate neuronal microtubule stability, which controls both synaptogenesis and neuronal survival. The polypeptide is Protein spartin (Drosophila melanogaster (Fruit fly)).